Consider the following 579-residue polypeptide: MEDNSCIGFEGSKRFGETSKRIIGLIDSVTESTTDSSLSSSSSGVGSSSGRSSVAERSVSSPPTKSQILGWPLGQGSWRKSSGKMKKKTPTKIDDFGFKRVGTETSEIELLKERMAKLLLGEDMSGSGEGVCPALAISNAITNLYAAILGQQWRLEPIPSEKKLMWRREIEVLLSVSDHIVELVPSFQNFPNGNKIEVMNCRPRSDLFTCLPALRKLDNMLIEILDSFGETEFWYVDQGIVAAESARSNSFREDGDKWWLPLPRVPSDGLTEQTRKKLDHTREFTNQILKACMSINSIALAEMEVPQSYLEALPKNGRSCLGDFLYRNITSDNFSADHLLESIDLSSELAVVEMANRVEASMYVWRRRAHSRHLISLYRSTSTRWGMIVKEMMMHQTDGDKREIFAERAESLLIRLKQRFPGLRQTALDTSKIQYNKDVGKSILESYSRVLESLAYSIGVRIEEVLFMDDISKDDGDGDDDSCSDKLRLLSKEAASGGSGSLREKLSAPSLFSVSFSGTSTPYRTLSFSASTPSYSPMPLISPINGGRGGERAPFLSGRNIRERCGFGPKKALANYLRG.

Low complexity predominate over residues 31–61 (ESTTDSSLSSSSSGVGSSSGRSSVAERSVSS). The disordered stretch occupies residues 31–89 (ESTTDSSLSSSSSGVGSSSGRSSVAERSVSSPPTKSQILGWPLGQGSWRKSSGKMKKKT). Residues 98–479 (FKRVGTETSE…DISKDDGDGD (382 aa)) enclose the PRONE domain.

In terms of biological role, guanine-nucleotide exchange factor (GEF) that acts as an activator of Rop (Rho of plants) GTPases by promoting the exchange of GDP for GTP. The protein is Rop guanine nucleotide exchange factor 6 (ROPGEF6) of Arabidopsis thaliana (Mouse-ear cress).